The sequence spans 254 residues: uncharacterized protein (254 aa).

The protein belongs to the methyltransferase superfamily.

This is an uncharacterized protein from Mycobacterium tuberculosis (strain ATCC 25177 / H37Ra).